We begin with the raw amino-acid sequence, 206 residues long: Geminin (206 aa).

A compositionally biased stretch (polar residues) spans 1-18 (MNLSMKQKQEGAQENVKN). The tract at residues 1-42 (MNLSMKQKQEGAQENVKNSPVPRRTLKMIQPSADGSLVGREN) is disordered. K27 bears the N6-acetyllysine mark. Phosphoserine occurs at positions 36, 63, and 64. The necessary and sufficient for interaction with IDAS and CDT1 stretch occupies residues 79–158 (TQEAFDLISK…AEVIERLSNE (80 aa)). Residues 91–141 (PSSQYWKEVAEQRRKALYEALKENEKLHKEIEQKDSEIARLRKENKDLAEV) adopt a coiled-coil conformation. Positions 157 to 206 (NEPLDNFESPDSQEFDSEEEAVEYSELEDSGAGTCAEETVSSSTDARPCT) are disordered. Acidic residues predominate over residues 167 to 185 (DSQEFDSEEEAVEYSELED). Positions 167–187 (DSQEFDSEEEAVEYSELEDSG) are homeodomain binding. Position 181 is a phosphoserine; by CK2 (S181). Residues 195–206 (TVSSSTDARPCT) show a composition bias toward polar residues.

The protein belongs to the geminin family. As to quaternary structure, homotetramer. Interacts with CDT1; this inhibits binding of the MCM complex to origins of replication. The complex with CDT1 exists in two forms, a 'permissive' heterotrimer and an 'inhibitory' heterohexamer. Interacts (via coiled-coil domain) with IDAS (via coiled-coil domain); this targets GMNN to the nucleus. The heterodimer formed by GMNN and MCIDAS has much lower affinity for CDT1 than the GMNN homodimer. Interacts with a subset of Hox proteins, affinity increasing from anterior to posterior types, the strongest interaction being with HOXB1, HOXC9 and HOXD10. Interacts with LRWD1 from G1/S to mitosis. Post-translationally, phosphorylated during mitosis. Phosphorylation at Ser-181 by CK2 results in enhanced binding to Hox proteins and more potent inhibitory effect on Hox transcriptional activity.

The protein resides in the cytoplasm. It localises to the nucleus. In terms of biological role, inhibits DNA replication by preventing the incorporation of MCM complex into pre-replication complex (pre-RC). It is degraded during the mitotic phase of the cell cycle. Its destruction at the metaphase-anaphase transition permits replication in the succeeding cell cycle. Inhibits histone acetyltransferase activity of KAT7/HBO1 in a CDT1-dependent manner, inhibiting histone H4 acetylation and DNA replication licensing. Inhibits the transcriptional activity of a subset of Hox proteins, enrolling them in cell proliferative control. This is Geminin (Gmnn) from Mus musculus (Mouse).